The following is a 245-amino-acid chain: Ribonuclease 3 (245 aa).

An RNase III domain is found at 19–148 (FKVFQEKIGI…FIGALYLDQG (130 aa)). Mg(2+) is bound at residue E61. The active site involves D65. The Mg(2+) site is built by D134 and E137. E137 is an active-site residue. One can recognise a DRBM domain in the interval 174–243 (DYKSQLQELI…AAEALKKLKE (70 aa)).

The protein belongs to the ribonuclease III family. Homodimer. It depends on Mg(2+) as a cofactor.

Its subcellular location is the cytoplasm. The enzyme catalyses Endonucleolytic cleavage to 5'-phosphomonoester.. In terms of biological role, digests double-stranded RNA. Involved in the processing of primary rRNA transcript to yield the immediate precursors to the large and small rRNAs (23S and 16S). Processes some mRNAs, and tRNAs when they are encoded in the rRNA operon. Processes pre-crRNA and tracrRNA of type II CRISPR loci if present in the organism. The sequence is that of Ribonuclease 3 from Bacillus cereus (strain AH187).